Reading from the N-terminus, the 259-residue chain is Proteasome subunit alpha (259 aa).

Belongs to the peptidase T1A family. In terms of assembly, the 20S proteasome core is composed of 14 alpha and 14 beta subunits that assemble into four stacked heptameric rings, resulting in a barrel-shaped structure. The two inner rings, each composed of seven catalytic beta subunits, are sandwiched by two outer rings, each composed of seven alpha subunits. The catalytic chamber with the active sites is on the inside of the barrel. Has a gated structure, the ends of the cylinder being occluded by the N-termini of the alpha-subunits. Is capped at one or both ends by the proteasome regulatory ATPase, PAN.

Its subcellular location is the cytoplasm. With respect to regulation, the formation of the proteasomal ATPase PAN-20S proteasome complex, via the docking of the C-termini of PAN into the intersubunit pockets in the alpha-rings, triggers opening of the gate for substrate entry. Interconversion between the open-gate and close-gate conformations leads to a dynamic regulation of the 20S proteasome proteolysis activity. Its function is as follows. Component of the proteasome core, a large protease complex with broad specificity involved in protein degradation. The polypeptide is Proteasome subunit alpha (Methanococcus vannielii (strain ATCC 35089 / DSM 1224 / JCM 13029 / OCM 148 / SB)).